The following is a 368-amino-acid chain: DNA replication and repair protein RecF (368 aa).

Position 30 to 37 (30 to 37 (GNNAQGKT)) interacts with ATP.

Belongs to the RecF family.

It is found in the cytoplasm. In terms of biological role, the RecF protein is involved in DNA metabolism; it is required for DNA replication and normal SOS inducibility. RecF binds preferentially to single-stranded, linear DNA. It also seems to bind ATP. The chain is DNA replication and repair protein RecF from Streptococcus pyogenes serotype M18 (strain MGAS8232).